Reading from the N-terminus, the 515-residue chain is Cytochrome P450 2D7 (515 aa).

Residues 1 to 2 (MG) lie on the Extracellular side of the membrane. The chain crosses the membrane as a helical span at residues 3-23 (LEALVPLAMIVAIFLLLVDLM). Residues 24-301 (HRHQRWAARY…DENLRIVVGN (278 aa)) are Cytoplasmic-facing. A helical membrane pass occupies residues 302 to 322 (LFLAGMVTTSTTLAWGLLLMI). Over 323–515 (LHLDVQRGRR…SPYELCAVPR (193 aa)) the chain is Extracellular. N-linked (GlcNAc...) asparagine glycosylation occurs at Asn416. Residue Cys461 participates in heme binding.

The protein belongs to the cytochrome P450 family. Heme serves as cofactor. As to expression, expressed in brain cortex (at protein level).

Its subcellular location is the membrane. The protein resides in the cytoplasm. It localises to the mitochondrion. The catalysed reaction is an organic molecule + reduced [NADPH--hemoprotein reductase] + O2 = an alcohol + oxidized [NADPH--hemoprotein reductase] + H2O + H(+). In terms of biological role, may be responsible for the metabolism of many drugs and environmental chemicals that it oxidizes. It may be involved in the metabolism of codeine to morphine. However, another study could not confirm it. The sequence is that of Cytochrome P450 2D7 from Homo sapiens (Human).